The primary structure comprises 335 residues: MSRSILLLPLAIALGLGFFIARPESTVTPVAEAPASSPAANLTAARPAQRTATGAAPQVMAKLPASFKGTEVDGQFQLDAAGNLIIGPELRQLFDYFLSAIGEEPLKQSIERLRRHIAAQLPEPAQAQALAVLNQYLNYKRQLVDFEAQHPRVADLASMRDRLSAVRALRAHAFDPAIHQAFFGLEEAYDHFSLERLAIRFDPALDSDAKGRAIDQLRAGLPAELQDLLIPQLQTELREQTTALLANGAGPQQLRQLRQQLVGSEAADRLEALDLQRRQWQQRVASYQQERTRIETARGLDEVERRAAVERLEAQRFSDSERLRLLAVVQEDRTR.

The chain crosses the membrane as a helical span at residues 7-23 (LLPLAIALGLGFFIARP).

It belongs to the lipase chaperone family.

The protein resides in the cell inner membrane. In terms of biological role, may be involved in the folding of the extracellular lipase during its passage through the periplasm. The chain is Lipase chaperone (lifO) from Ectopseudomonas mendocina (Pseudomonas mendocina).